The chain runs to 646 residues: MGNYKPSIKQYVVTVKAIKSSQFGRLGICAVVLLFVLGYPFYFISNNPFDTSIRYQYVDPYNDTTRKYTTIEKQHTDIGGNGTTILYPKNLQLDQTALSQLLNTTETTNPFVQYIGNSSSIAFSQLNQTLVNHSIQVFDPFSNSDNCSDLMTETQLTISQNIIIKESFEIMVKRLMHQLDTEPAFKELAPFFQNKLSLHLRMRSYHKHFYKFARTSVWLKDYGVHLMISRVIYSQKGKKGDPQISLLYTQLYDTNWQELTNTDLLVSMQDITGEYKLEKLQFPRFLPMPFYYNPKLTKGRWYGPEDARIMLVKNQLDMEEPVVIYNSYHRQIANHTTTGKTDGSVELNFEFYRSMFVGWPFRYQLGKSNTDGFVDDRFDNVKFTRVAELKIHNQTRASIEKNWTPFVDPSERDPEDKSLYIVYQWDKLRILKCDISNLVTDDGFIHYSACRFKQDTKHDEVEKVGPIRGGTELIPTIINNKQLWVGFLRAHIDKCGCGKAMYRPNMVVLQKTDMGTFQVAYLSSYISFNIPVPGWKTHEIQCGKRDPNVLIPNGISNWEVATIDGIERDVLTMTLSAADEDNILMDIHGLKTVIKNLITNQKHGNEFNSDSVQMKCVVAYSIEFCRAYGEEQARLGLTGGWLPSHN.

At 1-25 (MGNYKPSIKQYVVTVKAIKSSQFGR) the chain is on the cytoplasmic side. Residues 26–46 (LGICAVVLLFVLGYPFYFISN) traverse the membrane as a helical segment. Over 47–646 (NPFDTSIRYQ…LTGGWLPSHN (600 aa)) the chain is Extracellular. 9 N-linked (GlcNAc...) asparagine glycosylation sites follow: N62, N81, N103, N117, N127, N132, N146, N334, and N393.

This sequence belongs to the BMT family.

It localises to the membrane. Functionally, beta-mannosyltransferase involved in cell wall biosynthesis. Required for beta-1,2-mannose transfer on phospholipomannan. Required for pro-inflammatory response in macrophages through phospholipomannan-induced TNF-alpha production. This chain is Beta-mannosyltransferase 6 (BMT6), found in Candida albicans (strain SC5314 / ATCC MYA-2876) (Yeast).